Consider the following 340-residue polypeptide: Phosphate acyltransferase (340 aa).

The protein belongs to the PlsX family. As to quaternary structure, homodimer. Probably interacts with PlsY.

The protein localises to the cytoplasm. It catalyses the reaction a fatty acyl-[ACP] + phosphate = an acyl phosphate + holo-[ACP]. The protein operates within lipid metabolism; phospholipid metabolism. In terms of biological role, catalyzes the reversible formation of acyl-phosphate (acyl-PO(4)) from acyl-[acyl-carrier-protein] (acyl-ACP). This enzyme utilizes acyl-ACP as fatty acyl donor, but not acyl-CoA. The sequence is that of Phosphate acyltransferase from Nostoc punctiforme (strain ATCC 29133 / PCC 73102).